The following is a 349-amino-acid chain: DNA replication and repair protein RecF (349 aa).

Residue 29 to 36 (GLNGVGKT) coordinates ATP.

The protein belongs to the RecF family.

Its subcellular location is the cytoplasm. The RecF protein is involved in DNA metabolism; it is required for DNA replication and normal SOS inducibility. RecF binds preferentially to single-stranded, linear DNA. It also seems to bind ATP. The sequence is that of DNA replication and repair protein RecF from Acholeplasma laidlawii (strain PG-8A).